The following is a 148-amino-acid chain: Protein ORM1 (148 aa).

4 consecutive transmembrane segments (helical) span residues 12–32, 36–56, 89–109, and 111–131; these read WIIHVVVITLLKLFFNLFPGV, WSWTLTNMTYVVGSYVMFHLI, FLIIVPIALFLVSTHYAHYDL, and MFSWNCFLTTFVAVVPKLPVT.

This sequence to yeast YLR350W C-terminus.

It localises to the membrane. The sequence is that of Protein ORM1 (ORM1) from Saccharomyces pastorianus (strain ATCC 76670 / Carlsberg bottom yeast no.2 / CBS 1503 / CLIB 180 / NBRC 10610 / NRRL Y-1525) (Saaz-type lager yeast).